Here is a 533-residue protein sequence, read N- to C-terminus: Beta-glucosidase 10 (533 aa).

The N-terminal stretch at 1–23 (MAVAGAMVMSGGVLLLLLAFTCA) is a signal peptide. Residue Gln53 participates in a beta-D-glucoside binding. Asn122 carries N-linked (GlcNAc...) asparagine glycosylation. A beta-D-glucoside is bound by residues His157 and 202–203 (NE). Residue Glu203 is the Proton donor of the active site. Cys222 and Cys230 are oxidised to a cystine. Tyr369 serves as a coordination point for a beta-D-glucoside. An N-linked (GlcNAc...) asparagine glycan is attached at Asn384. Glu440 contacts a beta-D-glucoside. The Nucleophile role is filled by Glu440. Residue Asn448 is glycosylated (N-linked (GlcNAc...) asparagine). A beta-D-glucoside contacts are provided by residues Trp489, 496 to 497 (EW), and Phe505.

It belongs to the glycosyl hydrolase 1 family.

The enzyme catalyses Hydrolysis of terminal, non-reducing beta-D-glucosyl residues with release of beta-D-glucose.. In Oryza sativa subsp. japonica (Rice), this protein is Beta-glucosidase 10 (BGLU10).